The primary structure comprises 485 residues: Catalase isozyme 1 (485 aa).

Active-site residues include His-58 and Asn-131. Residue Tyr-341 coordinates heme.

This sequence belongs to the catalase family. Homotetramer. Heme is required as a cofactor.

It is found in the peroxisome. It catalyses the reaction 2 H2O2 = O2 + 2 H2O. Functionally, occurs in almost all aerobically respiring organisms and serves to protect cells from the toxic effects of hydrogen peroxide. In Nicotiana plumbaginifolia (Leadwort-leaved tobacco), this protein is Catalase isozyme 1 (CAT1).